A 471-amino-acid chain; its full sequence is MSYIYLFITAAAVTGALGSSPSYNGLGLTPQMGWDNWNTFACDVSEQLLLNTADRISEIGLKDLGYKYVILDDCWSSGRNSNGTLVADKNKFPNGMDHVARHLHNNNFLFGMYSSAGEYTCAGYPGSLGHEQEDAEFFARNGVDYLKYDNCYNKGKFGTPETSYKRYKAMSDALNKTGRPIFYSLCNWGQDLTFYWGSDIANSWRMSGDIYPEFDRPDSRCPCDGDQYDCSYAGFHCSIMNILNKAAPMGQNAGIGGWNDLDNLEVGVGNLTDDEEKAHFSMWAMVKSPLIIGADVNHLKESSYSIYSQASVIAINQDPKGVPATRVWRHYVSQTDKYGKGEIQLWSCPLDNGDQVIALLNGSNKKRPMNASLEDIFFDSYLGSEELSSSWDIYDLWANRIDNTIASNILKNNKVTNSSLYNATELSYKEGLSKNDTRLFGVQIGTVSPGGLLNTTVPAHGVALYRLRRSR.

The signal sequence occupies residues 1–18 (MSYIYLFITAAAVTGALG). Residues Cys-42 and Cys-74 are joined by a disulfide bond. The substrate site is built by Asp-72 and Asp-73. Residue Asn-82 is glycosylated (N-linked (GlcNAc...) asparagine). Cys-121 and Cys-151 are joined by a disulfide. Lys-147 is a binding site for substrate. Asp-149 (nucleophile) is an active-site residue. N-linked (GlcNAc...) asparagine glycosylation occurs at Asn-175. Position 205 (Arg-205) interacts with substrate. The active-site Proton donor is Asp-209. Intrachain disulfides connect Cys-221/Cys-237 and Cys-223/Cys-230. Residue Gln-251 coordinates substrate. Residues Asn-270, Asn-361, Asn-370, Asn-417, Asn-422, Asn-435, and Asn-454 are each glycosylated (N-linked (GlcNAc...) asparagine).

This sequence belongs to the glycosyl hydrolase 27 family. As to quaternary structure, homotetramer.

The protein localises to the secreted. The enzyme catalyses Hydrolysis of terminal, non-reducing alpha-D-galactose residues in alpha-D-galactosides, including galactose oligosaccharides, galactomannans and galactolipids.. The chain is Alpha-galactosidase (MEL) from Saccharomyces mikatae (Yeast).